The following is a 398-amino-acid chain: 1-deoxy-D-xylulose 5-phosphate reductoisomerase (398 aa).

Threonine 10, glycine 11, serine 12, isoleucine 13, glycine 36, lysine 37, asparagine 38, and asparagine 124 together coordinate NADPH. Lysine 125 is a 1-deoxy-D-xylulose 5-phosphate binding site. Residue glutamate 126 participates in NADPH binding. Aspartate 150 contacts Mn(2+). 1-deoxy-D-xylulose 5-phosphate contacts are provided by serine 151, glutamate 152, serine 186, and histidine 209. Mn(2+) is bound at residue glutamate 152. NADPH is bound at residue glycine 215. Residues serine 222, asparagine 227, lysine 228, and glutamate 231 each contribute to the 1-deoxy-D-xylulose 5-phosphate site. Residue glutamate 231 participates in Mn(2+) binding.

It belongs to the DXR family. In terms of assembly, homodimer. It depends on Mg(2+) as a cofactor. Requires Mn(2+) as cofactor.

The enzyme catalyses 2-C-methyl-D-erythritol 4-phosphate + NADP(+) = 1-deoxy-D-xylulose 5-phosphate + NADPH + H(+). It functions in the pathway isoprenoid biosynthesis; isopentenyl diphosphate biosynthesis via DXP pathway; isopentenyl diphosphate from 1-deoxy-D-xylulose 5-phosphate: step 1/6. Catalyzes the NADPH-dependent rearrangement and reduction of 1-deoxy-D-xylulose-5-phosphate (DXP) to 2-C-methyl-D-erythritol 4-phosphate (MEP). The chain is 1-deoxy-D-xylulose 5-phosphate reductoisomerase from Salmonella choleraesuis (strain SC-B67).